We begin with the raw amino-acid sequence, 430 residues long: Cell division protein FtsZ (430 aa).

GTP is bound by residues 76-80, 163-165, glutamate 194, arginine 198, and aspartate 242; these read GGGCN and GTG. The tract at residues 374-418 is disordered; sequence KEKPQAKTSSKPVLSGPPAGVETVPSTTTPEDPLGEIPMAPELDI.

This sequence belongs to the FtsZ family. Homodimer. Polymerizes to form a dynamic ring structure in a strictly GTP-dependent manner. Interacts directly with several other division proteins.

The protein resides in the cytoplasm. Functionally, essential cell division protein that forms a contractile ring structure (Z ring) at the future cell division site. The regulation of the ring assembly controls the timing and the location of cell division. One of the functions of the FtsZ ring is to recruit other cell division proteins to the septum to produce a new cell wall between the dividing cells. Binds GTP and shows GTPase activity. The protein is Cell division protein FtsZ of Synechocystis sp. (strain ATCC 27184 / PCC 6803 / Kazusa).